We begin with the raw amino-acid sequence, 431 residues long: 5-methylthioadenosine/S-adenosylhomocysteine deaminase (431 aa).

Zn(2+) is bound by residues H61 and H63. Residues E90 and H183 each contribute to the substrate site. H210 serves as a coordination point for Zn(2+). 2 residues coordinate substrate: E213 and D298. D298 is a binding site for Zn(2+).

It belongs to the metallo-dependent hydrolases superfamily. MTA/SAH deaminase family. It depends on Zn(2+) as a cofactor.

It catalyses the reaction S-adenosyl-L-homocysteine + H2O + H(+) = S-inosyl-L-homocysteine + NH4(+). It carries out the reaction S-methyl-5'-thioadenosine + H2O + H(+) = S-methyl-5'-thioinosine + NH4(+). In terms of biological role, catalyzes the deamination of 5-methylthioadenosine and S-adenosyl-L-homocysteine into 5-methylthioinosine and S-inosyl-L-homocysteine, respectively. Is also able to deaminate adenosine. In Halobacterium salinarum (strain ATCC 700922 / JCM 11081 / NRC-1) (Halobacterium halobium), this protein is 5-methylthioadenosine/S-adenosylhomocysteine deaminase.